We begin with the raw amino-acid sequence, 142 residues long: Large ribosomal subunit protein uL11 (142 aa).

The protein belongs to the universal ribosomal protein uL11 family. As to quaternary structure, part of the ribosomal stalk of the 50S ribosomal subunit. Interacts with L10 and the large rRNA to form the base of the stalk. L10 forms an elongated spine to which L12 dimers bind in a sequential fashion forming a multimeric L10(L12)X complex. One or more lysine residues are methylated.

In terms of biological role, forms part of the ribosomal stalk which helps the ribosome interact with GTP-bound translation factors. This Vesicomyosocius okutanii subsp. Calyptogena okutanii (strain HA) protein is Large ribosomal subunit protein uL11.